We begin with the raw amino-acid sequence, 115 residues long: Large ribosomal subunit protein bL20c (115 aa).

Belongs to the bacterial ribosomal protein bL20 family.

It is found in the plastid. The protein localises to the chloroplast. Binds directly to 23S ribosomal RNA and is necessary for the in vitro assembly process of the 50S ribosomal subunit. It is not involved in the protein synthesizing functions of that subunit. In Chaetosphaeridium globosum (Charophycean green alga), this protein is Large ribosomal subunit protein bL20c.